A 234-amino-acid chain; its full sequence is 7-carboxy-7-deazaguanine synthase (234 aa).

A disordered region spans residues 1-28; sequence MPLNCDTKTAGEISSSIPSGSGSHQPAA. The span at 13–23 shows a compositional bias: low complexity; that stretch reads ISSSIPSGSGS. Substrate-binding positions include 42–44 and Arg-57; that span reads LQG. Residues 48-234 enclose the Radical SAM core domain; the sequence is TSGYPTIFIR…LQLHKFIGLP (187 aa). Cys-61, Cys-65, and Cys-68 together coordinate [4Fe-4S] cluster. Residue Thr-70 participates in Mg(2+) binding. Thr-100 is a binding site for substrate. Gly-102 contacts S-adenosyl-L-methionine. Position 234 (Pro-234) interacts with substrate.

The protein belongs to the radical SAM superfamily. 7-carboxy-7-deazaguanine synthase family. In terms of assembly, homodimer. [4Fe-4S] cluster serves as cofactor. S-adenosyl-L-methionine is required as a cofactor. Requires Mg(2+) as cofactor.

It carries out the reaction 6-carboxy-5,6,7,8-tetrahydropterin + H(+) = 7-carboxy-7-deazaguanine + NH4(+). The protein operates within purine metabolism; 7-cyano-7-deazaguanine biosynthesis. Functionally, catalyzes the complex heterocyclic radical-mediated conversion of 6-carboxy-5,6,7,8-tetrahydropterin (CPH4) to 7-carboxy-7-deazaguanine (CDG), a step common to the biosynthetic pathways of all 7-deazapurine-containing compounds. This Methanospirillum hungatei JF-1 (strain ATCC 27890 / DSM 864 / NBRC 100397 / JF-1) protein is 7-carboxy-7-deazaguanine synthase.